Consider the following 387-residue polypeptide: Patatin-11 (387 aa).

A signal peptide spans 1–23 (MATTKSVLVLIFMILATTSSTFA). The 199-residue stretch at 32 to 230 (LSTDGGGIKG…TVGDPALLSL (199 aa)) folds into the PNPLA domain. A GXGXXG motif is present at residues 36–41 (GGGIKG). The short motif at 75–79 (GTSTG) is the GXSXG element. The Nucleophile role is filled by serine 77. A glycan (N-linked (GlcNAc...) asparagine) is linked at asparagine 115. Residue aspartate 216 is the Proton acceptor of the active site. Residues 216 to 218 (DGG) carry the DGA/G motif. Residues 322–385 (ENALNGTTTE…DRKKLRANKA (64 aa)) adopt a coiled-coil conformation. Asparagine 326 carries N-linked (GlcNAc...) asparagine glycosylation.

This sequence belongs to the patatin family. Tuber.

It localises to the vacuole. In terms of biological role, probable lipolytic acyl hydrolase (LAH), an activity which is thought to be involved in the response of tubers to pathogens. The polypeptide is Patatin-11 (Solanum tuberosum (Potato)).